We begin with the raw amino-acid sequence, 420 residues long: MTEAAAQPHALPADAPDIAPERDLLSKFDGLIAERQKLLDSGVTDPFAIVMEQVKSPTEAVIRGKDTILLGTYNYMGMTFDPDVIAAGKEALEKFGSGTNGSRMLNGTFHDHMEVEQALRDFYGTTGAIVFSTGYMANLGIISTLAGKGEYVILDADSHASIYDGCQQGNAEIVRFRHNSVEDLDKRLGRLPKEPAKLVVLEGVYSMLGDIAPLKEMVAVAKKHGAMVLVDEAHSMGFFGPNGRGVYEAQGLEGQIDFVVGTFSKSVGTVGGFVVSNHPKFEAVRLACRPYIFTASLPPSVVATATTSIRKLMTAHEKRERLWSNARALHGGLKAMGFRLGTETCDSAIVAVMLEDQEQAAMMWQALLDGGLYVNMARPPATPAGTFLLRCSICAEHTPAQIQTVLGMFQAAGRAVGVIG.

Pyridoxal 5'-phosphate is bound by residues 134-135 (GY), H234, T262, and S264. K265 carries the N6-(pyridoxal phosphate)lysine modification.

Belongs to the class-II pyridoxal-phosphate-dependent aminotransferase family. As to quaternary structure, homodimer. Requires pyridoxal 5'-phosphate as cofactor.

The protein resides in the cytoplasm. It carries out the reaction L-serine + hexadecanoyl-CoA + H(+) = 3-oxosphinganine + CO2 + CoA. It functions in the pathway lipid metabolism; sphingolipid metabolism. Not inhibited by relatively high concentrations of palmitoyl-CoA. Inhibited by both D-cycloserine (DCS) and L-cycloserine (LCS), which inactivate SPT by transamination to form a free pyridoxamine 5'-phosphate (PMP) and beta-aminooxyacetaldehyde that remain bound at the active site. Inhibition is reversed by incubation with excess pyridoxal phosphate. Inhibited by the fungal natural product myriocin, which acts as a competitive inhibitor for both L-serine and palmitoyl-CoA substrates. In terms of biological role, catalyzes the condensation of L-serine with palmitoyl-CoA (hexadecanoyl-CoA) to produce 3-oxosphinganine. Exhibits a broad substrate specificity concerning the chain length and the degree of unsaturation of acyl-CoA. The polypeptide is Serine palmitoyltransferase (Sphingomonas paucimobilis (Pseudomonas paucimobilis)).